The following is a 207-amino-acid chain: Large ribosomal subunit protein uL4 (207 aa).

A disordered region spans residues lysine 44–glycine 76. The segment covering glycine 60–glycine 76 has biased composition (basic residues).

Belongs to the universal ribosomal protein uL4 family. As to quaternary structure, part of the 50S ribosomal subunit.

Functionally, one of the primary rRNA binding proteins, this protein initially binds near the 5'-end of the 23S rRNA. It is important during the early stages of 50S assembly. It makes multiple contacts with different domains of the 23S rRNA in the assembled 50S subunit and ribosome. Its function is as follows. Forms part of the polypeptide exit tunnel. The protein is Large ribosomal subunit protein uL4 of Natranaerobius thermophilus (strain ATCC BAA-1301 / DSM 18059 / JW/NM-WN-LF).